A 304-amino-acid chain; its full sequence is uncharacterized protein (304 aa).

Coiled-coil stretches lie at residues 3-35 (KNQY…DKEI) and 89-132 (KSNK…NSNL). The interval 96–121 (LQNKQQENSEEKNSEEKNSEEKNSEE) is disordered.

This is an uncharacterized protein from Acanthamoeba polyphaga (Amoeba).